Here is a 136-residue protein sequence, read N- to C-terminus: Protein LpdD (136 aa).

The protein belongs to the CinA family.

In terms of biological role, probably involved in tannin degradation, however the precise biochemical function in metabolism of gallate is unknown. This Lactiplantibacillus plantarum (strain ATCC BAA-793 / NCIMB 8826 / WCFS1) (Lactobacillus plantarum) protein is Protein LpdD.